Consider the following 252-residue polypeptide: Thiazole synthase (252 aa).

K91 (schiff-base intermediate with DXP) is an active-site residue. 1-deoxy-D-xylulose 5-phosphate is bound by residues G152, A179–G180, and N201–T202.

It belongs to the ThiG family. Homotetramer. Forms heterodimers with either ThiH or ThiS.

It is found in the cytoplasm. It carries out the reaction [ThiS sulfur-carrier protein]-C-terminal-Gly-aminoethanethioate + 2-iminoacetate + 1-deoxy-D-xylulose 5-phosphate = [ThiS sulfur-carrier protein]-C-terminal Gly-Gly + 2-[(2R,5Z)-2-carboxy-4-methylthiazol-5(2H)-ylidene]ethyl phosphate + 2 H2O + H(+). The protein operates within cofactor biosynthesis; thiamine diphosphate biosynthesis. In terms of biological role, catalyzes the rearrangement of 1-deoxy-D-xylulose 5-phosphate (DXP) to produce the thiazole phosphate moiety of thiamine. Sulfur is provided by the thiocarboxylate moiety of the carrier protein ThiS. In vitro, sulfur can be provided by H(2)S. The protein is Thiazole synthase of Erwinia pyrifoliae (strain DSM 12162 / Ep1/96).